The primary structure comprises 496 residues: Probable CtpA-like serine protease (496 aa).

Residues Met1 to Ser26 are disordered. The segment covering Asn10–Glu25 has biased composition (basic and acidic residues). Residues Phe39–Ile59 form a helical membrane-spanning segment. In terms of domain architecture, PDZ spans Thr124 to Gly206. Active-site charge relay system residues include Ser329, Asp340, and Lys354.

It belongs to the peptidase S41A family.

It localises to the cell membrane. The chain is Probable CtpA-like serine protease from Staphylococcus haemolyticus (strain JCSC1435).